We begin with the raw amino-acid sequence, 1351 residues long: ABC transporter C family member 6 (1351 aa).

Residues 112-397 form the ABC transmembrane type-1 1 domain; it reads NKYALVSNLF…LPYDIFKAIG (286 aa). 3 helical membrane-spanning segments follow: residues 120–140, 149–169, and 248–268; these read LFII…INYI, SILK…GQSI, and LLCY…VIAL. An ABC transporter 1 domain is found at 474-700; the sequence is NQDESINKKE…GIDFKSILKT (227 aa). 510-517 is an ATP binding site; it reads GVVGSGKT. Residues 701–734 are a coiled coil; it reads KEIKKNVENETDSEELIKNEIEIENEIIDVNNAI. 6 consecutive transmembrane segments (helical) span residues 771–791, 815–835, 904–924, 977–999, 1002–1022, and 1025–1045; these read GSSG…QAIF, IGYY…RILL, LISI…LSIA, MFDN…RWVS, LEVM…LFIS, and GLAA…SWGI. An ABC transmembrane type-1 2 domain is found at 777–1060; it reads LFITISLFFV…LEVKMNSFQR (284 aa). Residues 1101–1336 form the ABC transporter 2 domain; the sequence is IEFKNVEIKY…PNSKFNKLIK (236 aa). 1135–1142 is an ATP binding site; that stretch reads GRTGAGKT.

Belongs to the ABC transporter superfamily. ABCC family. Conjugate transporter (TC 3.A.1.208) subfamily.

It localises to the membrane. The sequence is that of ABC transporter C family member 6 (abcC6) from Dictyostelium discoideum (Social amoeba).